Reading from the N-terminus, the 347-residue chain is NADH-ubiquinone oxidoreductase chain 2 (347 aa).

A run of 10 helical transmembrane segments spans residues 3-23 (PPIL…VMLS), 25-45 (HWLL…PILM), 66-86 (ASML…QWVI), 111-131 (FHFW…MILL), 149-169 (INTN…GWGG), 178-198 (IMAY…TYNP), 201-221 (MVLN…LFML), 237-257 (FPLI…LPPL), 274-294 (NMII…YFYL), and 325-345 (LLPP…MLSV).

Belongs to the complex I subunit 2 family. In terms of assembly, core subunit of respiratory chain NADH dehydrogenase (Complex I) which is composed of 45 different subunits. Interacts with TMEM242.

The protein localises to the mitochondrion inner membrane. It carries out the reaction a ubiquinone + NADH + 5 H(+)(in) = a ubiquinol + NAD(+) + 4 H(+)(out). Core subunit of the mitochondrial membrane respiratory chain NADH dehydrogenase (Complex I) which catalyzes electron transfer from NADH through the respiratory chain, using ubiquinone as an electron acceptor. Essential for the catalytic activity and assembly of complex I. This is NADH-ubiquinone oxidoreductase chain 2 from Canis lupus familiaris (Dog).